The following is a 1881-amino-acid chain: Genome polyprotein (1881 aa).

Over residues 1–16 (MAQTLSKISNKENASS) the composition is skewed to polar residues. The tract at residues 1-93 (MAQTLSKISN…SHLKPASTDV (93 aa)) is disordered. Positions 37–50 (EPLDHDSRRGRDPV) are enriched in basic and acidic residues. In terms of domain architecture, SF3 helicase spans 564–720 (DKVISCCTRR…DKWKSDNPGK (157 aa)). Position 590–597 (590–597 (GPPGCGKT)) interacts with ATP. Tyr-1093 is subject to O-(5'-phospho-RNA)-tyrosine. Residues 1188-1341 (GVTHKNAIVS…KLIVPYVKVD (154 aa)) form the Peptidase C24 domain. Residues His-1222, Glu-1243, and Cys-1305 each act as for 3CLpro activity in the active site. Residues 1593–1718 (HDRYCVDYSK…IVPPLISSVM (126 aa)) enclose the RdRp catalytic domain.

In terms of assembly, homodimer. Interacts with NTPase, protein p30 and protease-polymerase p76. As to quaternary structure, interacts with capsid protein VP1 and protease-polymerase p76. Interacts with host IEF4e; this interaction plays a role in translation of viral proteins. Homooligomer. Interacts with Vpg, protein p32 and may interact with capsid protein VP1. Specific enzymatic cleavages in vivo yield mature proteins. Pro-Pol is first autocatalytically cleaved, then processes the whole polyprotein. Post-translationally, VPg is uridylylated by the polymerase and is covalently attached to the 5'-end of the polyadenylated genomic and subgenomic RNAs. This uridylylated form acts as a nucleotide-peptide primer for the polymerase.

The protein resides in the host endoplasmic reticulum membrane. It carries out the reaction a ribonucleoside 5'-triphosphate + H2O = a ribonucleoside 5'-diphosphate + phosphate + H(+). The catalysed reaction is RNA(n) + a ribonucleoside 5'-triphosphate = RNA(n+1) + diphosphate. The enzyme catalyses Endopeptidase with a preference for cleavage when the P1 position is occupied by Glu-|-Xaa and the P1' position is occupied by Gly-|-Yaa.. Functionally, together with NTPase and NS4, initiates the formation of the replication complex. Induces the proliferation of the host smooth ER membranes forming long tubular structures. These remodeled membranes probably form the viral factories that contain the replication complex. In terms of biological role, displays NTPase activity, but no helicase activity. Induces the formation of convoluted membranes derived from the host ER. These remodeled membranes probably form the viral factories that contain the replication complex. Together with NS2 and NS4, initiates the formation of the replication complex. Probable key protein responsible for the formation of membrane alterations by the virus. Induces the formation of convoluted membranes derived from the host ER. These remodeled membranes probably form the viral factories that contain the replication complex. Together with NS2 and NTPase, initiates the formation of the replication complex. Its function is as follows. Viral genome-linked protein is covalently linked to the 5'-end of the positive-strand, negative-strand genomic RNAs and subgenomic RNA. Acts as a genome-linked replication primer. May recruit ribosome to viral RNA thereby promoting viral proteins translation. Interacts with host translation initiation complex to allow the translation of viral proteins. Functionally, protease-polymerase p76 processes the polyprotein: Pro-Pol is first released by autocleavage, then all other proteins are cleaved. Cleaves host translation initiation factor eIF4G1, eIF4G2 and PABP1 thereby inducing a shutdown of host protein synthesis. This shutdown may not prevent viral mRNA from being translated since viral Vpg replaces the cap. Also functions as an RNA-directed RNA polymerase, which replicates genomic and antigenomic viral RNA by recognizing specific signals. Also transcribes a subgenomic mRNA by initiating RNA synthesis internally on antigenomic RNA. This sgRNA codes for structural proteins. Catalyzes the covalent attachment VPg with viral RNAs. The protein is Genome polyprotein of Vesicular exanthema of swine virus serotype A48 (isolate Swine/United States/A48/1948) (VESV).